The primary structure comprises 85 residues: UPF0297 protein lhv_0439 (85 aa).

Belongs to the UPF0297 family.

The chain is UPF0297 protein lhv_0439 from Lactobacillus helveticus (strain DPC 4571).